A 457-amino-acid chain; its full sequence is Multidrug resistance protein MdtK (457 aa).

The Cytoplasmic portion of the chain corresponds to 1 to 10 (MQKYISEARL). Residues 11-31 (LLALAIPVILAQIAQTAMGFV) traverse the membrane as a helical segment. At 32 to 52 (DTVMAGGYSATDMAAVAIGTS) the chain is on the periplasmic side. The helical transmembrane segment at 53–73 (IWLPAILFGHGLLLALTPVIA) threads the bilayer. At 74 to 92 (QLNGSGRRERIAHQVRQGF) the chain is on the cytoplasmic side. The helical transmembrane segment at 93 to 113 (WLAGFVSVLIMLVLWNAGYII) threads the bilayer. Over 114-126 (RSMENIDPALADK) the chain is Periplasmic. The chain crosses the membrane as a helical span at residues 127-147 (AVGYLRALLWGAPGYLFFQVA). The Cytoplasmic segment spans residues 148–159 (RNQCEGLAKTKP). A helical membrane pass occupies residues 160–180 (GMVMGFIGLLVNIPVNYIFIY). The Periplasmic segment spans residues 181–191 (GHFGMPELSGV). Residues 192–212 (GCGVATAAVYWAMFLAMVSYI) traverse the membrane as a helical segment. Over 213–242 (KRARSMRDIRNEKGTAKPDPAVMKRLIQLG) the chain is Cytoplasmic. A helical membrane pass occupies residues 243–263 (LPIALALFFEVTLFAVVALLV). Residues 264 to 275 (SPLGIVDVAGHQ) are Periplasmic-facing. A helical transmembrane segment spans residues 276 to 296 (IALNFSSLMFVLPMSLAAAVT). The Cytoplasmic segment spans residues 297–313 (IRVGYRLGQGSTLDAQT). Residues 314-334 (AARTGLMVGVCMATLTAIFTV) form a helical membrane-spanning segment. Topologically, residues 335-349 (SLREQIALLYNDNPE) are periplasmic. A helical transmembrane segment spans residues 350–370 (VVTLAAHLMLLAAVYQISDSI). Over 371–386 (QVIGSGILRGYKDTRS) the chain is Cytoplasmic. A helical membrane pass occupies residues 387-407 (IFYITFTAYWVLGLPSGYILA). Residues 408–417 (LTDLVVEPMG) are Periplasmic-facing. The helical transmembrane segment at 418 to 438 (PAGFWIGFIIGLTSAAIMMML) threads the bilayer. Residues 439-457 (RMRFLQRLPSAIILQRASR) are Cytoplasmic-facing.

Belongs to the multi antimicrobial extrusion (MATE) (TC 2.A.66.1) family. MdtK subfamily.

The protein localises to the cell inner membrane. Multidrug efflux pump that functions probably as a Na(+)/drug antiporter. This is Multidrug resistance protein MdtK from Shigella dysenteriae serotype 1 (strain Sd197).